The primary structure comprises 156 residues: Small ribosomal subunit protein uS7c (156 aa).

The protein belongs to the universal ribosomal protein uS7 family. In terms of assembly, part of the 30S ribosomal subunit.

It localises to the plastid. Its subcellular location is the chloroplast. In terms of biological role, one of the primary rRNA binding proteins, it binds directly to 16S rRNA where it nucleates assembly of the head domain of the 30S subunit. The polypeptide is Small ribosomal subunit protein uS7c (rps7) (Porphyra purpurea (Red seaweed)).